The sequence spans 709 residues: Kelch-like protein 11 (709 aa).

Positions 1 to 15 (MAAAVAAAAAAAAAA) are cleaved as a signal peptide. The region spanning 95–171 (CDITLCFGGA…MYTGRIRVST (77 aa)) is the BTB domain. One can recognise a BACK domain in the interval 206–308 (CVAIHSLAHM…KPTYLTRHVK (103 aa)). Kelch repeat units follow at residues 361–408 (VIMV…ITES), 409–454 (YVYV…EVKG), 456–502 (LYSI…AIED), 504–557 (FVYI…VVNS), and 611–662 (DVFI…HVRI). The residue at position 466 (Ser-466) is a Phosphoserine.

As to quaternary structure, homodimer. Interacts with CUL3. Component of a cullin-RING-based BCR (BTB-CUL3-RBX1) E3 ubiquitin-protein ligase complex.

In terms of biological role, component of a cullin-RING-based BCR (BTB-CUL3-RBX1) E3 ubiquitin-protein ligase complex that mediates the ubiquitination of target proteins, leading most often to their proteasomal degradation. This chain is Kelch-like protein 11 (Klhl11), found in Mus musculus (Mouse).